The chain runs to 92 residues: Acylphosphatase (92 aa).

The region spanning 4 to 92 is the Acylphosphatase-like domain; sequence AVQLDVFGRV…SACHKFSVVG (89 aa). Catalysis depends on residues Arg19 and Asn37.

Belongs to the acylphosphatase family.

It carries out the reaction an acyl phosphate + H2O = a carboxylate + phosphate + H(+). The chain is Acylphosphatase (acyP) from Latilactobacillus sakei subsp. sakei (strain 23K) (Lactobacillus sakei subsp. sakei).